The primary structure comprises 197 residues: ATP-dependent Clp protease proteolytic subunit (197 aa).

The active-site Nucleophile is S98. H123 is an active-site residue.

This sequence belongs to the peptidase S14 family. Fourteen ClpP subunits assemble into 2 heptameric rings which stack back to back to give a disk-like structure with a central cavity, resembling the structure of eukaryotic proteasomes.

The protein resides in the cytoplasm. It catalyses the reaction Hydrolysis of proteins to small peptides in the presence of ATP and magnesium. alpha-casein is the usual test substrate. In the absence of ATP, only oligopeptides shorter than five residues are hydrolyzed (such as succinyl-Leu-Tyr-|-NHMec, and Leu-Tyr-Leu-|-Tyr-Trp, in which cleavage of the -Tyr-|-Leu- and -Tyr-|-Trp bonds also occurs).. Its function is as follows. Cleaves peptides in various proteins in a process that requires ATP hydrolysis. Has a chymotrypsin-like activity. Plays a major role in the degradation of misfolded proteins. The sequence is that of ATP-dependent Clp protease proteolytic subunit from Lysinibacillus sphaericus (strain C3-41).